The chain runs to 393 residues: Argininosuccinate synthase (393 aa).

ATP is bound by residues 10–18 and Ala-37; that span reads AYSGGLDTS. Tyr-88 is a binding site for L-citrulline. Gly-118 provides a ligand contact to ATP. L-aspartate-binding residues include Thr-120, Asn-124, and Asp-125. Residue Asn-124 participates in L-citrulline binding. L-citrulline is bound by residues Arg-128, Ser-176, Ser-185, Glu-261, and Tyr-273.

It belongs to the argininosuccinate synthase family. Type 1 subfamily. Homotetramer.

Its subcellular location is the cytoplasm. It catalyses the reaction L-citrulline + L-aspartate + ATP = 2-(N(omega)-L-arginino)succinate + AMP + diphosphate + H(+). It functions in the pathway amino-acid biosynthesis; L-arginine biosynthesis; L-arginine from L-ornithine and carbamoyl phosphate: step 2/3. The protein is Argininosuccinate synthase of Carsonella ruddii (strain PV).